The chain runs to 310 residues: Probable deoxyhypusine synthase (310 aa).

Lys-284 (nucleophile) is an active-site residue.

The protein belongs to the deoxyhypusine synthase family. The cofactor is NAD(+).

It catalyses the reaction [eIF5A protein]-L-lysine + spermidine = [eIF5A protein]-deoxyhypusine + propane-1,3-diamine. Its pathway is protein modification; eIF5A hypusination. Functionally, catalyzes the NAD-dependent oxidative cleavage of spermidine and the subsequent transfer of the butylamine moiety of spermidine to the epsilon-amino group of a specific lysine residue of the eIF-5A precursor protein to form the intermediate deoxyhypusine residue. The chain is Probable deoxyhypusine synthase (dys) from Thermoplasma acidophilum (strain ATCC 25905 / DSM 1728 / JCM 9062 / NBRC 15155 / AMRC-C165).